The sequence spans 249 residues: Transcription initiation factor TFIID subunit 9B (249 aa).

M1 is modified (N-acetylmethionine). S147 is subject to Phosphoserine. Residues A148 to A171 are disordered. T172 carries the phosphothreonine modification. At S175 the chain carries Phosphoserine. The segment covering V224–N234 has biased composition (polar residues). The tract at residues V224–M249 is disordered.

Belongs to the TAF9 family. As to quaternary structure, binds TAF5 and TAF6. Component of TFIID and the TATA-binding protein-free TAF complex (TFTC). TFIID is composed of TATA binding protein (TBP) and a number of TBP-associated factors (TAFs). Binds N-terminal domain of p53/TP53 which is essential for transcription.

Its subcellular location is the nucleus. Functionally, essential for cell viability. TAF9 and TAF9B are involved in transcriptional activation as well as repression of distinct but overlapping sets of genes. May have a role in gene regulation associated with apoptosis. TAFs are components of the transcription factor IID (TFIID) complex, the TBP-free TAFII complex (TFTC), the PCAF histone acetylase complex and the STAGA transcription coactivator-HAT complex. TFIID or TFTC are essential for the regulation of RNA polymerase II-mediated transcription. In Mus musculus (Mouse), this protein is Transcription initiation factor TFIID subunit 9B (Taf9b).